Consider the following 194-residue polypeptide: MTAITITDAAHDYLADLLSKQNTPGIGIRVFITQPGTQYAETCIAYCKPGEEKPEDTALGLKSFTAYIDAFSEAFLDDAVVDYATDRMGGQLTIKAPNAKVPNVNADSPVNERINYYLQTEINPGLASHGGQVSLIDVVDDGIAVLKFGGGCQGCGQADVTLREGIERTLLERIPELKGVRDVTDHTQKENAYY.

Positions 152 and 155 each coordinate [4Fe-4S] cluster.

It belongs to the NfuA family. As to quaternary structure, homodimer. Requires [4Fe-4S] cluster as cofactor.

Functionally, involved in iron-sulfur cluster biogenesis. Binds a 4Fe-4S cluster, can transfer this cluster to apoproteins, and thereby intervenes in the maturation of Fe/S proteins. Could also act as a scaffold/chaperone for damaged Fe/S proteins. The polypeptide is Fe/S biogenesis protein NfuA (Pseudomonas fluorescens (strain SBW25)).